Consider the following 113-residue polypeptide: uncharacterized protein (113 aa).

This is an uncharacterized protein from Listeria innocua serovar 6a (strain ATCC BAA-680 / CLIP 11262).